Here is a 583-residue protein sequence, read N- to C-terminus: Eukaryotic translation initiation factor 3 subunit D (583 aa).

The interval 116–150 (GRAQRGAGQRGGRAGFQRVGAGRGQGDRFYDNRGG) is disordered. Residues 140 to 149 (QGDRFYDNRG) are compositionally biased toward basic and acidic residues. The segment at 298–312 (SLDLVTVNENAIDAP) is RNA gate. A disordered region spans residues 561-583 (NTFEEDEEAAAEEEEQKAEEDEE). A compositionally biased stretch (acidic residues) spans 563–583 (FEEDEEAAAEEEEQKAEEDEE).

This sequence belongs to the eIF-3 subunit D family. Component of the eukaryotic translation initiation factor 3 (eIF-3) complex.

The protein localises to the cytoplasm. MRNA cap-binding component of the eukaryotic translation initiation factor 3 (eIF-3) complex, which is involved in protein synthesis of a specialized repertoire of mRNAs and, together with other initiation factors, stimulates binding of mRNA and methionyl-tRNAi to the 40S ribosome. The eIF-3 complex specifically targets and initiates translation of a subset of mRNAs involved in cell proliferation. In the eIF-3 complex, eif3d specifically recognizes and binds the 7-methylguanosine cap of a subset of mRNAs. This is Eukaryotic translation initiation factor 3 subunit D from Aspergillus oryzae (strain ATCC 42149 / RIB 40) (Yellow koji mold).